The primary structure comprises 99 residues: EPIDERMAL PATTERNING FACTOR-like protein 8 (99 aa).

The N-terminal stretch at 1-35 is a signal peptide; sequence MDSSRKYKRCGFGAALFVANIFFSLLSLHCISGAH. Intrachain disulfides connect C53–C90, C57–C63, and C60–C92.

This sequence belongs to the plant cysteine rich small secretory peptide family. Epidermal patterning factor subfamily.

It localises to the secreted. Functionally, controls stomatal patterning. The sequence is that of EPIDERMAL PATTERNING FACTOR-like protein 8 from Arabidopsis thaliana (Mouse-ear cress).